A 127-amino-acid chain; its full sequence is Large ribosomal subunit protein bL12 (127 aa).

The tract at residues 101–127 is disordered; it reads VKTGVSKEEAEDAKKQLVESGAEVEIK. Residues 105–117 show a composition bias toward basic and acidic residues; that stretch reads VSKEEAEDAKKQL.

The protein belongs to the bacterial ribosomal protein bL12 family. As to quaternary structure, homodimer. Part of the ribosomal stalk of the 50S ribosomal subunit. Forms a multimeric L10(L12)X complex, where L10 forms an elongated spine to which 2 to 4 L12 dimers bind in a sequential fashion. Binds GTP-bound translation factors.

Forms part of the ribosomal stalk which helps the ribosome interact with GTP-bound translation factors. Is thus essential for accurate translation. The sequence is that of Large ribosomal subunit protein bL12 from Geobacter metallireducens (strain ATCC 53774 / DSM 7210 / GS-15).